The chain runs to 598 residues: MFS siderochrome iron transporter D (598 aa).

The interval methionine 1 to proline 34 is disordered. The Cytoplasmic portion of the chain corresponds to methionine 1–lysine 76. The chain crosses the membrane as a helical span at residues isoleucine 77–alanine 97. Residues serine 98 to serine 115 lie on the Extracellular side of the membrane. Asparagine 102 carries N-linked (GlcNAc...) asparagine glycosylation. Residues leucine 116–alanine 136 traverse the membrane as a helical segment. The Cytoplasmic segment spans residues lysine 137–arginine 144. A helical transmembrane segment spans residues serine 145–cysteine 165. The Extracellular segment spans residues histidine 166–tyrosine 171. The chain crosses the membrane as a helical span at residues cysteine 172–isoleucine 192. The Cytoplasmic portion of the chain corresponds to threonine 193 to glycine 203. Residues leucine 204 to alanine 224 traverse the membrane as a helical segment. Topologically, residues glutamate 225–arginine 233 are extracellular. A helical transmembrane segment spans residues tryptophan 234 to leucine 254. Over arginine 255–aspartate 289 the chain is Cytoplasmic. A helical transmembrane segment spans residues isoleucine 290–alanine 310. The Extracellular segment spans residues glycine 311–lysine 318. Residues serine 319–valine 339 form a helical membrane-spanning segment. Residues glutamate 340 to arginine 341 are Cytoplasmic-facing. The helical transmembrane segment at phenylalanine 342 to alanine 362 threads the bilayer. Over cysteine 363–glycine 396 the chain is Extracellular. The chain crosses the membrane as a helical span at residues tyrosine 397–isoleucine 417. Residues lysine 418–arginine 424 lie on the Cytoplasmic side of the membrane. Residues tryptophan 425 to arginine 445 traverse the membrane as a helical segment. Topologically, residues lysine 446–serine 450 are extracellular. Residues valine 451–cysteine 471 form a helical membrane-spanning segment. Topologically, residues glutamine 472–alanine 490 are cytoplasmic. Residues phenylalanine 491 to tryptophan 511 traverse the membrane as a helical segment. Over threonine 512–glutamine 562 the chain is Extracellular. Residues serine 563–isoleucine 583 traverse the membrane as a helical segment. The Cytoplasmic portion of the chain corresponds to arginine 584–phenylalanine 598.

It belongs to the major facilitator superfamily.

It is found in the cell membrane. Major facilitator transporter involved in fusarinine C (FsC) uptake. In contrast to TAFC-mediated iron uptake, FsC-mediated iron uptake via mirD does not play a significant role during infection. This Aspergillus fumigatus (strain ATCC MYA-4609 / CBS 101355 / FGSC A1100 / Af293) (Neosartorya fumigata) protein is MFS siderochrome iron transporter D.